The chain runs to 114 residues: T cell receptor beta variable 4-3 (114 aa).

A signal peptide spans 1 to 21 (MGCRLLCCAVLCLLGAVPMET). The Ig-like domain occupies 22–114 (GVTQTPRHLV…SALYLCASSQ (93 aa)). Residues C42 and C110 are joined by a disulfide bond. N-linked (GlcNAc...) asparagine glycans are attached at residues N76 and N89.

Alpha-beta TR is a heterodimer composed of an alpha and beta chain; disulfide-linked. The alpha-beta TR is associated with the transmembrane signaling CD3 coreceptor proteins to form the TR-CD3 (TcR or TCR). The assembly of alpha-beta TR heterodimers with CD3 occurs in the endoplasmic reticulum where a single alpha-beta TR heterodimer associates with one CD3D-CD3E heterodimer, one CD3G-CD3E heterodimer and one CD247 homodimer forming a stable octameric structure. CD3D-CD3E and CD3G-CD3E heterodimers preferentially associate with TR alpha and TR beta chains, respectively. The association of the CD247 homodimer is the last step of TcR assembly in the endoplasmic reticulum and is required for transport to the cell surface.

The protein localises to the cell membrane. In terms of biological role, v region of the variable domain of T cell receptor (TR) beta chain that participates in the antigen recognition. Alpha-beta T cell receptors are antigen specific receptors which are essential to the immune response and are present on the cell surface of T lymphocytes. Recognize peptide-major histocompatibility (MH) (pMH) complexes that are displayed by antigen presenting cells (APC), a prerequisite for efficient T cell adaptive immunity against pathogens. Binding of alpha-beta TR to pMH complex initiates TR-CD3 clustering on the cell surface and intracellular activation of LCK that phosphorylates the ITAM motifs of CD3G, CD3D, CD3E and CD247 enabling the recruitment of ZAP70. In turn ZAP70 phosphorylates LAT, which recruits numerous signaling molecules to form the LAT signalosome. The LAT signalosome propagates signal branching to three major signaling pathways, the calcium, the mitogen-activated protein kinase (MAPK) kinase and the nuclear factor NF-kappa-B (NF-kB) pathways, leading to the mobilization of transcription factors that are critical for gene expression and essential for T cell growth and differentiation. The T cell repertoire is generated in the thymus, by V-(D)-J rearrangement. This repertoire is then shaped by intrathymic selection events to generate a peripheral T cell pool of self-MH restricted, non-autoaggressive T cells. Post-thymic interaction of alpha-beta TR with the pMH complexes shapes TR structural and functional avidity. The protein is T cell receptor beta variable 4-3 of Homo sapiens (Human).